The primary structure comprises 490 residues: GTPase Der (490 aa).

EngA-type G domains follow at residues Pro-3–Ile-166 and Ile-203–Thr-376. GTP-binding positions include Gly-9–Ser-16, Asp-56–Ile-60, Asn-118–Asp-121, Gly-209–Ser-216, Asp-256–Val-260, and Asn-321–Asp-324. Residues Arg-377–Glu-461 form the KH-like domain.

The protein belongs to the TRAFAC class TrmE-Era-EngA-EngB-Septin-like GTPase superfamily. EngA (Der) GTPase family. Associates with the 50S ribosomal subunit.

GTPase that plays an essential role in the late steps of ribosome biogenesis. This Enterobacter sp. (strain 638) protein is GTPase Der.